A 333-amino-acid polypeptide reads, in one-letter code: Alpha-N-acetylgalactosaminide alpha-2,6-sialyltransferase 6 (333 aa).

Residues Met1–Pro12 are compositionally biased toward polar residues. A disordered region spans residues Met1–Leu26. Residues Met1–Ser43 lie on the Cytoplasmic side of the membrane. Residues Ala44–Ala64 traverse the membrane as a helical; Signal-anchor for type II membrane protein segment. Residues Asn65 to Thr333 are Lumenal-facing. Asn98 is a glycosylation site (N-linked (GlcNAc...) asparagine). Cys108 and Cys256 are joined by a disulfide.

It belongs to the glycosyltransferase 29 family. As to expression, expressed in kidney, in proximal tubule epithelial cells. Expressed in colon cell lines.

It localises to the golgi apparatus membrane. The catalysed reaction is a ganglioside GM1b (d18:1(4E)) + CMP-N-acetyl-beta-neuraminate = a ganglioside GD1alpha (d18:1(4E)) + CMP + H(+). It carries out the reaction N-acetyl-alpha-neuraminosyl-(2-&gt;3)-beta-D-galactosyl-(1-&gt;3)-N-acetyl-beta-D-glucosaminyl-(1-&gt;3)-beta-D-galactosyl-(1-&gt;4)-beta-D-glucosyl-(1&lt;-&gt;1')-N-acyl-sphing-4-enine + CMP-N-acetyl-beta-neuraminate = N-acetyl-alpha-neuraminosyl-(2-&gt;3)-beta-D-galactosyl-(1-&gt;3)-[N-acetyl-alpha-neuraminosyl-(2-&gt;6)]-N-acetyl-beta-D-glucosaminyl-(1-&gt;3)-beta-D-galactosyl-(1-&gt;4)-beta-D-glucosyl-(1&lt;-&gt;1')-N-acyl-sphing-4-enine + CMP + H(+). It catalyses the reaction a globoside MSGG + CMP-N-acetyl-beta-neuraminate = a globoside DSGG + CMP + H(+). The enzyme catalyses a ganglioside GD1a (d18:1(4E)) + CMP-N-acetyl-beta-neuraminate = a ganglioside GT1aalpha (d18:1(4E)) + CMP + H(+). The catalysed reaction is a ganglioside GT1b (d18:1(4E)) + CMP-N-acetyl-beta-neuraminate = a ganglioside GQ1balpha (d18:1(4E)) + CMP + H(+). It carries out the reaction 3-O-[alpha-Neu5Ac-(2-&gt;3)-beta-D-Gal-(1-&gt;3)-alpha-D-GalNAc]-L-Ser-[protein] + CMP-N-acetyl-beta-neuraminate = a 3-O-{alpha-Neu5Ac-(2-&gt;3)-beta-D-Gal-(1-&gt;3)-[alpha-Neu5Ac-(2-&gt;6)]-alpha-D-GalNAc}-L-seryl-[protein] + CMP + H(+). It catalyses the reaction 3-O-[alpha-Neu5Ac-(2-&gt;3)-beta-D-Gal-(1-&gt;3)-alpha-D-GalNAc]-L-Thr-[protein] + CMP-N-acetyl-beta-neuraminate = a 3-O-{alpha-Neu5Ac-(2-&gt;3)-beta-D-Gal-(1-&gt;3)-[alpha-Neu5Ac-(2-&gt;6)]-alpha-D-GalNAc}-L-threonyl-[protein] + CMP + H(+). In terms of biological role, transfers the sialyl group (N-acetyl-alpha-neuraminyl or NeuAc) from CMP-NeuAc onto glycoproteins and glycolipids, forming an alpha-2,6-linkage. Produces branched type disialyl structures by transfer of a sialyl group onto the GalNAc or GlcNAc residue inside backbone core chains having a terminal sialic acid with an alpha-2,3-linkage on Gal. ST6GalNAcVI prefers glycolipids to glycoproteins, predominantly catalyzing the biosynthesis of ganglioside GD1alpha from GM1b. Besides GMb1, MSGG and other glycolipids, it shows activity towards sialyl Lc4Cer generating disialyl Lc4Cer, which can lead to the synthesis of disialyl Lewis a (Le(a)), suggested to be a cancer-associated antigen. Also has activity toward GD1a and GT1b, and can generate DSGG (disialylgalactosylgloboside) from MSGG (monosialylgalactosylgloboside). In Homo sapiens (Human), this protein is Alpha-N-acetylgalactosaminide alpha-2,6-sialyltransferase 6 (ST6GALNAC6).